Reading from the N-terminus, the 391-residue chain is Trehalose-phosphate phosphatase (391 aa).

Catalysis depends on Asp147, which acts as the Nucleophile. Mg(2+) contacts are provided by Asp147, Asp149, and Asp330. A substrate-binding site is contributed by 147–149; it reads DFD.

The protein belongs to the trehalose phosphatase family. Requires Mg(2+) as cofactor.

The enzyme catalyses alpha,alpha-trehalose 6-phosphate + H2O = alpha,alpha-trehalose + phosphate. It functions in the pathway glycan biosynthesis; trehalose biosynthesis. Functionally, removes the phosphate from trehalose 6-phosphate to produce free trehalose. The sequence is that of Trehalose-phosphate phosphatase (otsB) from Mycobacterium bovis (strain ATCC BAA-935 / AF2122/97).